A 92-amino-acid chain; its full sequence is Small ribosomal subunit protein uS19c (92 aa).

It belongs to the universal ribosomal protein uS19 family.

It localises to the plastid. The protein localises to the chloroplast. Functionally, protein S19 forms a complex with S13 that binds strongly to the 16S ribosomal RNA. The polypeptide is Small ribosomal subunit protein uS19c (Lobularia maritima (Sweet alyssum)).